The sequence spans 304 residues: Pyridoxal 5'-phosphate synthase subunit pyroA (304 aa).

Residue D28 participates in D-ribose 5-phosphate binding. The active-site Schiff-base intermediate with D-ribose 5-phosphate is the K85. Residue G157 coordinates D-ribose 5-phosphate. R169 is a D-glyceraldehyde 3-phosphate binding site. Residues G224 and 245–246 (GS) contribute to the D-ribose 5-phosphate site.

This sequence belongs to the PdxS/SNZ family.

It catalyses the reaction aldehydo-D-ribose 5-phosphate + D-glyceraldehyde 3-phosphate + L-glutamine = pyridoxal 5'-phosphate + L-glutamate + phosphate + 3 H2O + H(+). The protein operates within cofactor biosynthesis; pyridoxal 5'-phosphate biosynthesis. Functionally, catalyzes the formation of pyridoxal 5'-phosphate from ribose 5-phosphate (RBP), glyceraldehyde 3-phosphate (G3P) and ammonia. The ammonia is provided by PDX2. Can also use ribulose 5-phosphate and dihydroxyacetone phosphate as substrates, resulting from enzyme-catalyzed isomerization of RBP and G3P, respectively. Also plays an indirect role in resistance to singlet oxygen-generating photosensitizers. The protein is Pyridoxal 5'-phosphate synthase subunit pyroA (pyroA) of Emericella nidulans (strain FGSC A4 / ATCC 38163 / CBS 112.46 / NRRL 194 / M139) (Aspergillus nidulans).